Reading from the N-terminus, the 421-residue chain is Enolase (421 aa).

Gln165 serves as a coordination point for (2R)-2-phosphoglycerate. Glu207 functions as the Proton donor in the catalytic mechanism. Mg(2+)-binding residues include Asp244, Glu285, and Asp312. Positions 337, 366, 367, and 388 each coordinate (2R)-2-phosphoglycerate. The active-site Proton acceptor is the Lys337.

It belongs to the enolase family. Requires Mg(2+) as cofactor.

It is found in the cytoplasm. Its subcellular location is the secreted. The protein resides in the cell surface. It catalyses the reaction (2R)-2-phosphoglycerate = phosphoenolpyruvate + H2O. It functions in the pathway carbohydrate degradation; glycolysis; pyruvate from D-glyceraldehyde 3-phosphate: step 4/5. Catalyzes the reversible conversion of 2-phosphoglycerate (2-PG) into phosphoenolpyruvate (PEP). It is essential for the degradation of carbohydrates via glycolysis. This is Enolase from Ehrlichia chaffeensis (strain ATCC CRL-10679 / Arkansas).